A 319-amino-acid polypeptide reads, in one-letter code: Lipopolysaccharide heptosyltransferase 1 (319 aa).

The ADP-L-glycero-beta-D-manno-heptose site is built by threonine 187, threonine 188, lysine 192, glutamate 222, methionine 242, aspartate 261, threonine 262, glycine 263, and histidine 266.

This sequence belongs to the glycosyltransferase 9 family.

The protein resides in the cell inner membrane. It carries out the reaction an alpha-Kdo-(2-&gt;4)-alpha-Kdo-(2-&gt;6)-lipid A + ADP-L-glycero-beta-D-manno-heptose = an L-alpha-D-Hep-(1-&gt;5)-[alpha-Kdo-(2-&gt;4)]-alpha-Kdo-(2-&gt;6)-lipid A + ADP + H(+). The catalysed reaction is alpha-Kdo-(2-&gt;4)-alpha-Kdo-(2-&gt;6)-lipid A (E. coli) + ADP-L-glycero-beta-D-manno-heptose = L-alpha-D-Hep-(1-&gt;5)-[alpha-Kdo-(2-&gt;4)]-alpha-Kdo-(2-&gt;6)-lipid A (E. coli) + ADP + H(+). Its pathway is bacterial outer membrane biogenesis; LPS core biosynthesis. Functionally, glycosyltransferase involved in the biosynthesis of the core oligosaccharide region of lipopolysaccharide (LPS). Catalyzes the addition of the first heptose unit to one 3-deoxy-D-manno-octulosonic acid (Kdo) residue of the Kdo2-lipid A module. The analog ADP-mannose can serve as an alternative donor in place of ADP-L-glycero-D-manno-heptose for the glycosylation of Kdo2-lipid A. Displays no activity with ADP-glucose, GDP-mannose, UDP-glucose or UDP-galactose. This Escherichia coli (strain K12) protein is Lipopolysaccharide heptosyltransferase 1.